The following is a 387-amino-acid chain: 3-ketoacyl-CoA thiolase (387 aa).

Cysteine 91 (acyl-thioester intermediate) is an active-site residue. Active-site proton acceptor residues include histidine 343 and cysteine 373.

It belongs to the thiolase-like superfamily. Thiolase family. As to quaternary structure, heterotetramer of two alpha chains (FadB) and two beta chains (FadA).

It is found in the cytoplasm. The catalysed reaction is an acyl-CoA + acetyl-CoA = a 3-oxoacyl-CoA + CoA. It participates in lipid metabolism; fatty acid beta-oxidation. Catalyzes the final step of fatty acid oxidation in which acetyl-CoA is released and the CoA ester of a fatty acid two carbons shorter is formed. Involved in the aerobic and anaerobic degradation of long-chain fatty acids. In Escherichia coli O6:H1 (strain CFT073 / ATCC 700928 / UPEC), this protein is 3-ketoacyl-CoA thiolase.